Reading from the N-terminus, the 205-residue chain is MAFRLVLASQSPRRRELLDQLGVAHEVRPANTDESVHPGEPARAYVLRVAREKARAVEGELVLAADTAVVLRGEVLGKPRDAEDARRMLAALSGTAHEVLTGVCVRRRPGRGSAVELDAVVSTAVRFAPLGPAEISWYVATGEPLDKAGAYAIQGVGGAFVLGVEGSVSNVVGLPLAETAELLRRAGHPLPWDAPGGPAQGGGAP.

D66 (proton acceptor) is an active-site residue.

The protein belongs to the Maf family. YhdE subfamily. The cofactor is a divalent metal cation.

It localises to the cytoplasm. It carries out the reaction dTTP + H2O = dTMP + diphosphate + H(+). The catalysed reaction is UTP + H2O = UMP + diphosphate + H(+). Functionally, nucleoside triphosphate pyrophosphatase that hydrolyzes dTTP and UTP. May have a dual role in cell division arrest and in preventing the incorporation of modified nucleotides into cellular nucleic acids. In Anaeromyxobacter sp. (strain Fw109-5), this protein is dTTP/UTP pyrophosphatase.